The sequence spans 938 residues: Isoleucine--tRNA ligase (938 aa).

The 'HIGH' region motif lies at 58 to 68; sequence PYANGSIHIGH. Residue lysine 183 is modified to N6-acetyllysine. An L-isoleucyl-5'-AMP-binding site is contributed by glutamate 561. The short motif at 602–606 is the 'KMSKS' region element; the sequence is KMSKS. Lysine 605 is a binding site for ATP. Residues cysteine 901, cysteine 904, cysteine 921, and cysteine 924 each contribute to the Zn(2+) site.

The protein belongs to the class-I aminoacyl-tRNA synthetase family. IleS type 1 subfamily. Monomer. Zn(2+) serves as cofactor.

Its subcellular location is the cytoplasm. It carries out the reaction tRNA(Ile) + L-isoleucine + ATP = L-isoleucyl-tRNA(Ile) + AMP + diphosphate. Its function is as follows. Catalyzes the attachment of isoleucine to tRNA(Ile). As IleRS can inadvertently accommodate and process structurally similar amino acids such as valine, to avoid such errors it has two additional distinct tRNA(Ile)-dependent editing activities. One activity is designated as 'pretransfer' editing and involves the hydrolysis of activated Val-AMP. The other activity is designated 'posttransfer' editing and involves deacylation of mischarged Val-tRNA(Ile). The polypeptide is Isoleucine--tRNA ligase (Shigella boydii serotype 4 (strain Sb227)).